The primary structure comprises 493 residues: C2H2-type transcription factor ffmA (493 aa).

A compositionally biased stretch (low complexity) spans 1–18 (MPMPQYTMQPQYPVSQPH). Disordered stretches follow at residues 1–50 (MPMP…SRYP), 68–140 (TTVG…YPDG), and 164–202 (EPPR…KNTT). Composition is skewed to polar residues over residues 69-79 (TVGSLPPSTFL) and 192-202 (NGVNGTAKNTT). The C2H2-type 1 zinc finger occupies 212–234 (FPCPHCNKTYLHAKHLKRHLLRH). The C2H2-type 2; degenerate zinc finger occupies 240 to 265 (YMCVLCKDTFSRSDILKRHFQKCSIR). Polar residues-rich tracts occupy residues 288–307 (QAAA…TVPP) and 484–493 (ASTTLGGDGK). 2 disordered regions span residues 288 to 316 (QAAA…GATF) and 468 to 493 (TTTA…GDGK).

The protein belongs to the krueppel C2H2-type zinc-finger protein family.

It is found in the nucleus. In terms of biological role, transcription factor that acts in coordination with atrR to regulate the expression of the ABC-type multidrug transporter abcG1 and thus plays a role in azole susceptibility. Regulates the expression of genes involved in fermentation. Is able to promote expression from the yeast FLO11 promoter. The sequence is that of C2H2-type transcription factor ffmA from Aspergillus fumigatus (strain CBS 144.89 / FGSC A1163 / CEA10) (Neosartorya fumigata).